Here is a 459-residue protein sequence, read N- to C-terminus: tRNA modification GTPase MnmE (459 aa).

(6S)-5-formyl-5,6,7,8-tetrahydrofolate is bound by residues Arg29, Glu86, and Lys125. One can recognise a TrmE-type G domain in the interval 221–382; it reads GMNVVIAGRP…LTEHLKAVMG (162 aa). Residue Asn231 participates in K(+) binding. GTP contacts are provided by residues 231 to 236, 250 to 256, and 275 to 278; these read NAGKSS, TNIEGTT, and DTAG. Ser235 contributes to the Mg(2+) binding site. Positions 250, 252, and 255 each coordinate K(+). Thr256 contributes to the Mg(2+) binding site. Position 459 (Lys459) interacts with (6S)-5-formyl-5,6,7,8-tetrahydrofolate.

The protein belongs to the TRAFAC class TrmE-Era-EngA-EngB-Septin-like GTPase superfamily. TrmE GTPase family. Homodimer. Heterotetramer of two MnmE and two MnmG subunits. K(+) serves as cofactor.

It is found in the cytoplasm. Exhibits a very high intrinsic GTPase hydrolysis rate. Involved in the addition of a carboxymethylaminomethyl (cmnm) group at the wobble position (U34) of certain tRNAs, forming tRNA-cmnm(5)s(2)U34. The protein is tRNA modification GTPase MnmE of Marinomonas sp. (strain MWYL1).